Consider the following 225-residue polypeptide: NAD(P)H-quinone oxidoreductase subunit K, chloroplastic (225 aa).

[4Fe-4S] cluster-binding residues include Cys43, Cys44, Cys108, and Cys139.

It belongs to the complex I 20 kDa subunit family. In terms of assembly, NDH is composed of at least 16 different subunits, 5 of which are encoded in the nucleus. [4Fe-4S] cluster is required as a cofactor.

The protein localises to the plastid. It localises to the chloroplast thylakoid membrane. The catalysed reaction is a plastoquinone + NADH + (n+1) H(+)(in) = a plastoquinol + NAD(+) + n H(+)(out). The enzyme catalyses a plastoquinone + NADPH + (n+1) H(+)(in) = a plastoquinol + NADP(+) + n H(+)(out). Its function is as follows. NDH shuttles electrons from NAD(P)H:plastoquinone, via FMN and iron-sulfur (Fe-S) centers, to quinones in the photosynthetic chain and possibly in a chloroplast respiratory chain. The immediate electron acceptor for the enzyme in this species is believed to be plastoquinone. Couples the redox reaction to proton translocation, and thus conserves the redox energy in a proton gradient. In Oenothera argillicola (Appalachian evening primrose), this protein is NAD(P)H-quinone oxidoreductase subunit K, chloroplastic.